A 337-amino-acid polypeptide reads, in one-letter code: Outer membrane protein U (337 aa).

The signal sequence occupies residues Met-1–Ala-21.

Belongs to the Gram-negative porin family. As to quaternary structure, homotrimer.

It localises to the cell outer membrane. Functionally, forms pores that allow passive diffusion of small molecules across the outer membrane. This Vibrio parahaemolyticus serotype O3:K6 (strain RIMD 2210633) protein is Outer membrane protein U (ompU).